We begin with the raw amino-acid sequence, 241 residues long: Carboxy-S-adenosyl-L-methionine synthase 1 (241 aa).

Residues tyrosine 37, 61 to 63 (GCS), asparagine 131, and arginine 198 contribute to the S-adenosyl-L-methionine site.

Belongs to the class I-like SAM-binding methyltransferase superfamily. Cx-SAM synthase family. In terms of assembly, homodimer.

It catalyses the reaction prephenate + S-adenosyl-L-methionine = carboxy-S-adenosyl-L-methionine + 3-phenylpyruvate + H2O. Catalyzes the conversion of S-adenosyl-L-methionine (SAM) to carboxy-S-adenosyl-L-methionine (Cx-SAM). The protein is Carboxy-S-adenosyl-L-methionine synthase 1 of Yersinia pseudotuberculosis serotype IB (strain PB1/+).